A 299-amino-acid chain; its full sequence is Oxygen-dependent coproporphyrinogen-III oxidase (299 aa).

Serine 92 provides a ligand contact to substrate. 2 residues coordinate a divalent metal cation: histidine 96 and histidine 106. Histidine 106 acts as the Proton donor in catalysis. Substrate is bound at residue 108–110; the sequence is NVR. Residues histidine 145 and histidine 175 each contribute to the a divalent metal cation site. The tract at residues 239 to 274 is important for dimerization; it reads YVEFNLVYDRGTLFGLQSGGRAESILMSLPPRVRWE. Residue 257-259 coordinates substrate; that stretch reads GGR.

It belongs to the aerobic coproporphyrinogen-III oxidase family. Homodimer. It depends on a divalent metal cation as a cofactor.

It is found in the cytoplasm. It catalyses the reaction coproporphyrinogen III + O2 + 2 H(+) = protoporphyrinogen IX + 2 CO2 + 2 H2O. It participates in porphyrin-containing compound metabolism; protoporphyrin-IX biosynthesis; protoporphyrinogen-IX from coproporphyrinogen-III (O2 route): step 1/1. Its function is as follows. Involved in the heme biosynthesis. Catalyzes the aerobic oxidative decarboxylation of propionate groups of rings A and B of coproporphyrinogen-III to yield the vinyl groups in protoporphyrinogen-IX. This chain is Oxygen-dependent coproporphyrinogen-III oxidase, found in Xanthomonas oryzae pv. oryzae (strain MAFF 311018).